An 87-amino-acid polypeptide reads, in one-letter code: Putative regulatory protein GTNG_1019 (87 aa).

This sequence belongs to the RemA family.

This is Putative regulatory protein GTNG_1019 from Geobacillus thermodenitrificans (strain NG80-2).